We begin with the raw amino-acid sequence, 166 residues long: Large ribosomal subunit protein uL10 (166 aa).

It belongs to the universal ribosomal protein uL10 family. Part of the ribosomal stalk of the 50S ribosomal subunit. The N-terminus interacts with L11 and the large rRNA to form the base of the stalk. The C-terminus forms an elongated spine to which L12 dimers bind in a sequential fashion forming a multimeric L10(L12)X complex.

In terms of biological role, forms part of the ribosomal stalk, playing a central role in the interaction of the ribosome with GTP-bound translation factors. This is Large ribosomal subunit protein uL10 from Aeromonas hydrophila subsp. hydrophila (strain ATCC 7966 / DSM 30187 / BCRC 13018 / CCUG 14551 / JCM 1027 / KCTC 2358 / NCIMB 9240 / NCTC 8049).